The primary structure comprises 175 residues: NAD(P)H-quinone oxidoreductase subunit I, chloroplastic (175 aa).

4Fe-4S ferredoxin-type domains follow at residues 55-84 and 95-124; these read GRIH…VNWE and QTYS…MTEE. Residues cysteine 64, cysteine 67, cysteine 70, cysteine 74, cysteine 104, cysteine 107, cysteine 110, and cysteine 114 each contribute to the [4Fe-4S] cluster site.

This sequence belongs to the complex I 23 kDa subunit family. In terms of assembly, NDH is composed of at least 16 different subunits, 5 of which are encoded in the nucleus. Requires [4Fe-4S] cluster as cofactor.

The protein localises to the plastid. It localises to the chloroplast thylakoid membrane. The enzyme catalyses a plastoquinone + NADH + (n+1) H(+)(in) = a plastoquinol + NAD(+) + n H(+)(out). It catalyses the reaction a plastoquinone + NADPH + (n+1) H(+)(in) = a plastoquinol + NADP(+) + n H(+)(out). In terms of biological role, NDH shuttles electrons from NAD(P)H:plastoquinone, via FMN and iron-sulfur (Fe-S) centers, to quinones in the photosynthetic chain and possibly in a chloroplast respiratory chain. The immediate electron acceptor for the enzyme in this species is believed to be plastoquinone. Couples the redox reaction to proton translocation, and thus conserves the redox energy in a proton gradient. This is NAD(P)H-quinone oxidoreductase subunit I, chloroplastic from Chlorokybus atmophyticus (Soil alga).